Consider the following 463-residue polypeptide: L-seryl-tRNA(Sec) selenium transferase (463 aa).

Lysine 295 carries the N6-(pyridoxal phosphate)lysine modification.

Belongs to the SelA family. As to quaternary structure, homodecamer; pentamer of dimers. Binds only one seryl-tRNA(Sec) per dimer. It depends on pyridoxal 5'-phosphate as a cofactor.

Its subcellular location is the cytoplasm. It carries out the reaction L-seryl-tRNA(Sec) + selenophosphate + H(+) = L-selenocysteinyl-tRNA(Sec) + phosphate. The protein operates within aminoacyl-tRNA biosynthesis; selenocysteinyl-tRNA(Sec) biosynthesis; selenocysteinyl-tRNA(Sec) from L-seryl-tRNA(Sec) (bacterial route): step 1/1. In terms of biological role, converts seryl-tRNA(Sec) to selenocysteinyl-tRNA(Sec) required for selenoprotein biosynthesis. The protein is L-seryl-tRNA(Sec) selenium transferase of Salmonella paratyphi A (strain AKU_12601).